The sequence spans 286 residues: 2-hydroxy-6-oxo-6-phenylhexa-2,4-dienoate hydrolase (286 aa).

Residues 42 to 43 (GG), asparagine 51, asparagine 111, threonine 180, and arginine 190 contribute to the substrate site. Residue histidine 265 is the Proton acceptor of the active site. Residue tryptophan 266 participates in substrate binding.

It belongs to the AB hydrolase superfamily. BphD family. Homodimer.

The enzyme catalyses 2,6-dioxo-6-phenylhexa-3-enoate + H2O = 2-oxopent-4-enoate + benzoate + H(+). Its pathway is xenobiotic degradation; biphenyl degradation; 2-hydroxy-2,4-pentadienoate and benzoate from biphenyl: step 4/4. Catalyzes an unusual C-C bond hydrolysis of 2-hydroxy-6-oxo-6-phenylhexa-2,4-dienoic acid (HOPDA) to produce benzoic acid and 2-hydroxy-2,4-pentadienoic acid (HPD). In Comamonas testosteroni (Pseudomonas testosteroni), this protein is 2-hydroxy-6-oxo-6-phenylhexa-2,4-dienoate hydrolase.